Reading from the N-terminus, the 325-residue chain is Dehydrogenase/reductase SDR family member 7B (325 aa).

Residues 1–17 lie on the Cytoplasmic side of the membrane; that stretch reads MISPSSRKGMLKERAMD. Residues 18-38 traverse the membrane as a helical; Signal-anchor for type II membrane protein segment; that stretch reads LVTQTTILPLLFGCLGIFSLF. Over 39–325 the chain is Lumenal; that stretch reads RLLQRTRSKA…ARKERKSKNS (287 aa). Residues Ser-62 and Leu-64 each coordinate NAD(+). Ser-194 is a substrate binding site. NAD(+)-binding residues include Tyr-207, Lys-211, and Thr-242. The Proton acceptor role is filled by Tyr-207.

This sequence belongs to the short-chain dehydrogenases/reductases (SDR) family.

The protein localises to the endoplasmic reticulum membrane. Its function is as follows. Putative oxidoreductase. The protein is Dehydrogenase/reductase SDR family member 7B (Dhrs7b) of Rattus norvegicus (Rat).